A 523-amino-acid chain; its full sequence is 2-isopropylmalate synthase (523 aa).

Residues V5–W267 form the Pyruvate carboxyltransferase domain. Positions 14, 202, 204, and 238 each coordinate Mn(2+). Residues R392–V523 are regulatory domain.

This sequence belongs to the alpha-IPM synthase/homocitrate synthase family. LeuA type 1 subfamily. Homodimer. The cofactor is Mn(2+).

The protein resides in the cytoplasm. It catalyses the reaction 3-methyl-2-oxobutanoate + acetyl-CoA + H2O = (2S)-2-isopropylmalate + CoA + H(+). Its pathway is amino-acid biosynthesis; L-leucine biosynthesis; L-leucine from 3-methyl-2-oxobutanoate: step 1/4. In terms of biological role, catalyzes the condensation of the acetyl group of acetyl-CoA with 3-methyl-2-oxobutanoate (2-ketoisovalerate) to form 3-carboxy-3-hydroxy-4-methylpentanoate (2-isopropylmalate). This chain is 2-isopropylmalate synthase, found in Shigella sonnei (strain Ss046).